A 425-amino-acid polypeptide reads, in one-letter code: Peroxisomal membrane protein PEX14 (425 aa).

Disordered regions lie at residues 49–89 and 247–425; these read RSQG…YRNA and DEPI…AAQS. Low complexity predominate over residues 56–76; sequence SSSVASQVSSYSPSASQSSVA. Residues 89 to 97 carry the SH3-binding motif; that stretch reads APPLPERDW. A compositionally biased stretch (polar residues) spans 256–297; the sequence is PSLTTGANSLTSESSGRSSIPHSQSVPIRTQLTTPPSDSDTS. Basic and acidic residues-rich tracts occupy residues 315 to 324 and 333 to 366; these read DILRKEKNRT and LGKDLESVAQSDPDKVEKYEGRRDLKSLERPEED.

This sequence belongs to the peroxin-14 family. In terms of assembly, interacts with PEX13 (via SH3 domain); forming the PEX13-PEX14 docking complex. Interacts with PEX5 (via WxxxF/Y motifs). Interacts with PEX20 (via WxxxF/Y motifs). Interacts with PEX3, PEX7, PEX8 and PEX17. Phosphorylated on serine or threonine residues.

The protein localises to the peroxisome membrane. In terms of biological role, component of the PEX13-PEX14 docking complex, a translocon channel that specifically mediates the import of peroxisomal cargo proteins bound to PEX5 or PEX20 receptors. The PEX13-PEX14 docking complex forms a large import pore which can be opened to a diameter of about 9 nm. Mechanistically, PEX5 (or PEX20) receptor along with cargo proteins associates with the PEX14 subunit of the PEX13-PEX14 docking complex in the cytosol, leading to the insertion of the receptor into the organelle membrane with the concomitant translocation of the cargo into the peroxisome matrix. The polypeptide is Peroxisomal membrane protein PEX14 (Komagataella pastoris (Yeast)).